Consider the following 204-residue polypeptide: Signal peptidase I (204 aa).

At 1 to 10 (MNSFKNFLKE) the chain is on the cytoplasmic side. The helical transmembrane segment at 11–30 (WGLFLLILSLLALSRIFFWS) threads the bilayer. Topologically, residues 31–204 (NVRVEGHSMD…LWPITRIGTF (174 aa)) are extracellular. Active-site residues include Ser-38 and Lys-76.

It belongs to the peptidase S26 family.

It is found in the cell membrane. It catalyses the reaction Cleavage of hydrophobic, N-terminal signal or leader sequences from secreted and periplasmic proteins.. The polypeptide is Signal peptidase I (lepB) (Streptococcus pneumoniae serotype 4 (strain ATCC BAA-334 / TIGR4)).